We begin with the raw amino-acid sequence, 216 residues long: Probable GTP-binding protein EngB (216 aa).

The EngB-type G domain occupies 37-214; the sequence is QGLEVAFAGR…RAAIIKLVAE (178 aa). GTP-binding positions include 45 to 52, 72 to 76, 92 to 95, 159 to 162, and 193 to 195; these read GRSNVGKS, GRTQE, DMPG, TKAD, and TSS. Positions 52 and 74 each coordinate Mg(2+).

It belongs to the TRAFAC class TrmE-Era-EngA-EngB-Septin-like GTPase superfamily. EngB GTPase family. Requires Mg(2+) as cofactor.

Functionally, necessary for normal cell division and for the maintenance of normal septation. The sequence is that of Probable GTP-binding protein EngB from Rhodopseudomonas palustris (strain BisA53).